Consider the following 195-residue polypeptide: Protein GrpE (195 aa).

It belongs to the GrpE family. In terms of assembly, homodimer.

Its subcellular location is the cytoplasm. Functionally, participates actively in the response to hyperosmotic and heat shock by preventing the aggregation of stress-denatured proteins, in association with DnaK and GrpE. It is the nucleotide exchange factor for DnaK and may function as a thermosensor. Unfolded proteins bind initially to DnaJ; upon interaction with the DnaJ-bound protein, DnaK hydrolyzes its bound ATP, resulting in the formation of a stable complex. GrpE releases ADP from DnaK; ATP binding to DnaK triggers the release of the substrate protein, thus completing the reaction cycle. Several rounds of ATP-dependent interactions between DnaJ, DnaK and GrpE are required for fully efficient folding. The sequence is that of Protein GrpE from Blochmanniella pennsylvanica (strain BPEN).